Here is a 225-residue protein sequence, read N- to C-terminus: tRNA (guanine-N(7)-)-methyltransferase (225 aa).

Positions 56, 81, 108, and 131 each coordinate S-adenosyl-L-methionine. Residue aspartate 131 is part of the active site. Substrate contacts are provided by residues lysine 135, aspartate 167, and 204–207 (TKFE).

Belongs to the class I-like SAM-binding methyltransferase superfamily. TrmB family.

The enzyme catalyses guanosine(46) in tRNA + S-adenosyl-L-methionine = N(7)-methylguanosine(46) in tRNA + S-adenosyl-L-homocysteine. It participates in tRNA modification; N(7)-methylguanine-tRNA biosynthesis. Catalyzes the formation of N(7)-methylguanine at position 46 (m7G46) in tRNA. This chain is tRNA (guanine-N(7)-)-methyltransferase, found in Legionella pneumophila (strain Lens).